Here is a 119-residue protein sequence, read N- to C-terminus: Beta-2-microglobulin (119 aa).

Positions 1-20 (MARFVAVALLVLLSLSGLET) are cleaved as a signal peptide. An Ig-like C1-type domain is found at 25–114 (PKIQVYSRHP…VTFSTPKTVK (90 aa)). A disulfide bridge connects residues Cys45 and Cys100.

The protein belongs to the beta-2-microglobulin family. In terms of assembly, heterodimer of an alpha chain and a beta chain. Beta-2-microglobulin is the beta-chain of major histocompatibility complex class I molecules.

Its subcellular location is the secreted. Component of the class I major histocompatibility complex (MHC). Involved in the presentation of peptide antigens to the immune system. This chain is Beta-2-microglobulin (B2M), found in Callicebus personatus personatus (Masked titi).